Here is a 397-residue protein sequence, read N- to C-terminus: Tryptophan synthase beta chain (397 aa).

Lys-87 is subject to N6-(pyridoxal phosphate)lysine.

The protein belongs to the TrpB family. As to quaternary structure, tetramer of two alpha and two beta chains. The cofactor is pyridoxal 5'-phosphate.

It catalyses the reaction (1S,2R)-1-C-(indol-3-yl)glycerol 3-phosphate + L-serine = D-glyceraldehyde 3-phosphate + L-tryptophan + H2O. It functions in the pathway amino-acid biosynthesis; L-tryptophan biosynthesis; L-tryptophan from chorismate: step 5/5. In terms of biological role, the beta subunit is responsible for the synthesis of L-tryptophan from indole and L-serine. In Escherichia fergusonii (strain ATCC 35469 / DSM 13698 / CCUG 18766 / IAM 14443 / JCM 21226 / LMG 7866 / NBRC 102419 / NCTC 12128 / CDC 0568-73), this protein is Tryptophan synthase beta chain.